Reading from the N-terminus, the 214-residue chain is uncharacterized protein (214 aa).

An N-terminal signal peptide occupies residues Met1–Ala24. The 134-residue stretch at Glu64 to Ile197 folds into the TNase-like domain. Residues Arg91, Glu99, and Arg142 contribute to the active site.

This is an uncharacterized protein from Bacillus anthracis.